Reading from the N-terminus, the 330-residue chain is ADP-L-glycero-D-manno-heptose-6-epimerase (330 aa).

NADP(+)-binding positions include 11 to 12 (FI), 32 to 33 (DN), Lys-39, Lys-54, 75 to 79 (EGACS), and Asn-92. Residue Tyr-139 is the Proton acceptor of the active site. An NADP(+)-binding site is contributed by Lys-143. Residue Asn-168 coordinates substrate. Positions 169 and 177 each coordinate NADP(+). The active-site Proton acceptor is the Lys-177. Substrate is bound by residues Arg-179, His-186, 200 to 203 (FGEY), Arg-213, and Tyr-292.

It belongs to the NAD(P)-dependent epimerase/dehydratase family. HldD subfamily. In terms of assembly, homopentamer. Requires NADP(+) as cofactor.

It carries out the reaction ADP-D-glycero-beta-D-manno-heptose = ADP-L-glycero-beta-D-manno-heptose. It participates in nucleotide-sugar biosynthesis; ADP-L-glycero-beta-D-manno-heptose biosynthesis; ADP-L-glycero-beta-D-manno-heptose from D-glycero-beta-D-manno-heptose 7-phosphate: step 4/4. Functionally, catalyzes the interconversion between ADP-D-glycero-beta-D-manno-heptose and ADP-L-glycero-beta-D-manno-heptose via an epimerization at carbon 6 of the heptose. In Burkholderia pseudomallei (strain K96243), this protein is ADP-L-glycero-D-manno-heptose-6-epimerase.